We begin with the raw amino-acid sequence, 386 residues long: O-methyltransferase 12 (386 aa).

Positions 207, 231, 254, 274, and 288 each coordinate S-adenosyl-L-homocysteine. Asp-254 lines the S-adenosyl-L-methionine pocket. The active-site Proton acceptor is His-292.

It belongs to the class I-like SAM-binding methyltransferase superfamily. Cation-independent O-methyltransferase family. Homodimer. Expressed at high levels in all tissues.

The catalysed reaction is 4-hydroxy-3,5-dimethoxyphenethylamine + S-adenosyl-L-methionine = mescaline + S-adenosyl-L-homocysteine + H(+). The enzyme catalyses dopamine + S-adenosyl-L-methionine = 4-methoxytyramine + S-adenosyl-L-homocysteine + H(+). It participates in aromatic compound metabolism. It functions in the pathway alkaloid biosynthesis. O-methyltransferase participating in the biosynthesis of natural products derived from phenylethylamine, including mescaline, a natural hallucinogen potentially used in psychotherapeutic treatments. Catalyzes the O-methylation of dopamine, 4-hydroxy-3,5-dimethoxyphenethylamine, 4,5-dihydroxy-3-methoxyphenethylamine and N-methyl-4,5-dihydroxy-3-methoxyphenethylamine. Also involved in the conversion of N-methyl-4-hydroxy-3,5-dimethoxyphenethylamine to N-methylmescaline. This Lophophora williamsii (Peyote) protein is O-methyltransferase 12.